We begin with the raw amino-acid sequence, 327 residues long: MDAIKGSELQIPDAIFAWVLDGQGGVKPLADDDIIDKDKPCWLHLNYTHSDSADWLAATPLLPNNVRDALAGESTRPRVTRIGDGALITLRCINGSTDERPDQLVAMRLYMDERLIVSTRQRKVLALDDVLGDLKEGNGPTDGGSWLVEVCDALTDHASEFIEQLHDRIIDLEDDLLDQQVPPRGFLALLRKQLIVMRRYMAPQRDVYARLASERLPWMSDDQRRRMQDIAERLGRGLDEIDSCIARTAIMSDEIAQIMQESLARRTYTMSLMAMVFLPSTFLTGLFGVNLGGIPGNSWHLGFSLFCLMLVVVIGGVAWWLHRSKWL.

The Cytoplasmic portion of the chain corresponds to Met1 to Met273. The helical transmembrane segment at Ala274–Ile294 threads the bilayer. Residues Pro295–His300 lie on the Periplasmic side of the membrane. A helical membrane pass occupies residues Leu301–Leu321. At His322–Leu327 the chain is on the cytoplasmic side.

This sequence belongs to the CorA metal ion transporter (MIT) (TC 1.A.35) family.

The protein resides in the cell inner membrane. The enzyme catalyses Zn(2+)(out) + H(+)(out) = Zn(2+)(in) + H(+)(in). Zinc transporter. Acts as a Zn(2+):proton symporter, which likely mediates zinc ion uptake. The protein is Zinc transport protein ZntB of Klebsiella pneumoniae subsp. pneumoniae (strain ATCC 700721 / MGH 78578).